A 525-amino-acid polypeptide reads, in one-letter code: Patatin-like protein 8 (525 aa).

The tract at residues Met1–Glu50 is disordered. The segment covering Thr26–Ala46 has biased composition (polar residues). Residues Leu124–Ile338 enclose the PNPLA domain. Residues Gly128–Gly133 carry the GXGXXG motif. Catalysis depends on Ser168, which acts as the Nucleophile.

Belongs to the patatin family. As to expression, specifically expressed in roots.

Its function is as follows. Possesses non-specific lipolytic acyl hydrolase (LAH) activity. Hydrolyzes phospholipids as well as galactolipids. May play a role in disease resistance. The protein is Patatin-like protein 8 (PLP8) of Arabidopsis thaliana (Mouse-ear cress).